A 344-amino-acid polypeptide reads, in one-letter code: C-C chemokine receptor-like 2 (344 aa).

At 1–43 (MANYTLAPEDEYDVLIEGELESDEAEQCDKYDAQALSAQLVPS) the chain is on the extracellular side. The N-linked (GlcNAc...) asparagine glycan is linked to N3. A helical membrane pass occupies residues 44–64 (LCSAVFVIGVLDNLLVVLILV). Topologically, residues 65–74 (KYKGLKRVEN) are cytoplasmic. The helical transmembrane segment at 75-95 (IYLLNLAVSNLCFLLTLPFWA) threads the bilayer. The Extracellular segment spans residues 96–104 (HAGGDPMCK). A disulfide bridge connects residues C103 and C181. A helical transmembrane segment spans residues 105–125 (ILIGLYFVGLYSETFFNCLLT). At 126 to 144 (VQRYLVFLHKGNFFSARRR) the chain is on the cytoplasmic side. The helical transmembrane segment at 145–165 (VPCGIITSVLAWVTAILATLP) threads the bilayer. At 166 to 198 (EFVVYKPQMEDQKYKCAFSRTPFLPADETFWKH) the chain is on the extracellular side. The chain crosses the membrane as a helical span at residues 199 to 219 (FLTLKMNISVLVLPLFIFTFL). Over 220–238 (YVQMRKTLRFREQRYSLFK) the chain is Cytoplasmic. Residues 239–259 (LVFAIMVVFLLMWAPYNIAFF) form a helical membrane-spanning segment. Residues 260–286 (LSTFKEHFSLSDCKSSYNLDKSVHITK) lie on the Extracellular side of the membrane. A helical transmembrane segment spans residues 287–307 (LIATTHCCINPLLYAFLDGTF). The Cytoplasmic portion of the chain corresponds to 308-344 (SKYLCRCFHLRSNTPLQPRGQSAQGTSREEPDHSTEV). The segment covering 324–333 (QPRGQSAQGT) has biased composition (polar residues). The segment at 324–344 (QPRGQSAQGTSREEPDHSTEV) is disordered. The span at 334-344 (SREEPDHSTEV) shows a compositional bias: basic and acidic residues.

The protein belongs to the G-protein coupled receptor 1 family. Expressed abundantly in immunal tissues such as spleen, fetal liver, lymph node and bone marrow. Strong expression also in lung and heart. Expressed in almost all hematopoietic cells including monocytes, macrophages, PMNs, T-cells (both CD4+ and CD8+), monocyte-derived iDCs, NK cells, and CD34+ progenitor cells. B-cells expressed isoform 1 but not isoform 2. Up-regulated on synovial neutrophils of rheumatoid arthritis patients.

It is found in the cell membrane. In terms of biological role, receptor for CCL19 and chemerin/RARRES2. Does not appear to be a signaling receptor, but may have a role in modulating chemokine-triggered immune responses by capturing and internalizing CCL19 or by presenting RARRES2 ligand to CMKLR1, a functional signaling receptors. Plays a critical role for the development of Th2 responses. The polypeptide is C-C chemokine receptor-like 2 (CCRL2) (Homo sapiens (Human)).